The following is a 277-amino-acid chain: Tryptophan synthase alpha chain (277 aa).

Catalysis depends on proton acceptor residues glutamate 50 and aspartate 61.

Belongs to the TrpA family. Tetramer of two alpha and two beta chains.

It carries out the reaction (1S,2R)-1-C-(indol-3-yl)glycerol 3-phosphate + L-serine = D-glyceraldehyde 3-phosphate + L-tryptophan + H2O. The protein operates within amino-acid biosynthesis; L-tryptophan biosynthesis; L-tryptophan from chorismate: step 5/5. In terms of biological role, the alpha subunit is responsible for the aldol cleavage of indoleglycerol phosphate to indole and glyceraldehyde 3-phosphate. This chain is Tryptophan synthase alpha chain, found in Beijerinckia indica subsp. indica (strain ATCC 9039 / DSM 1715 / NCIMB 8712).